The chain runs to 237 residues: MLSCFWFFSKHISSALMSLPRVLHRFTAPQCLASRYPLGPLLASPRRLLASVASSQDSTRPSRVRQNFHPDSEAAINRQINLELYASYVYLSMAYYFSRDDVALYNFSKYFLRQSLEEREHAEKLMKLQNQRGGRICLQDIKKPDKDDWECGLRAMECALLLEKNVNQSLLDLHTLASEKGDPHLCDFLETHYLHEQVKSIKELGDHVHNLVTMGAPAAGLAEYLFDKHTLGSESKH.

A mitochondrion-targeting transit peptide spans 1–49 (MLSCFWFFSKHISSALMSLPRVLHRFTAPQCLASRYPLGPLLASPRRLL). A Ferritin-like diiron domain is found at 66–215 (QNFHPDSEAA…DHVHNLVTMG (150 aa)). Fe cation is bound by residues Glu83, Glu118, His121, Glu163, and Gln197.

It belongs to the ferritin family. Homooligomer of 24 subunits. The functional molecule is roughly spherical and contains a central cavity into which the polymeric mineral iron core is deposited.

It localises to the mitochondrion. It catalyses the reaction 4 Fe(2+) + O2 + 4 H(+) = 4 Fe(3+) + 2 H2O. Functionally, catalyzes the oxidation of ferrous iron(II) to ferric iron(III) and stores iron in a soluble, non-toxic, readily available form. Important for iron homeostasis. Iron is taken up in the ferrous form and deposited as ferric hydroxides after oxidation. The polypeptide is Ferritin, mitochondrial (Mus musculus (Mouse)).